Here is an 838-residue protein sequence, read N- to C-terminus: Urease (838 aa).

In terms of domain architecture, Urease spans 400-838 (GAIDCHVHFI…VPLSRNYFLF (439 aa)). Residues H405, H407, and K488 each contribute to the Ni(2+) site. An N6-carboxylysine modification is found at K488. H490 contacts substrate. The Ni(2+) site is built by H517 and H543. H591 acts as the Proton donor in catalysis. D631 contributes to the Ni(2+) binding site.

It in the C-terminal section; belongs to the metallo-dependent hydrolases superfamily. Urease alpha subunit family. Homohexamer. Other oligomeric forms may exist depending on pH and presence of salts. Ni(2+) is required as a cofactor. In terms of processing, carboxylation allows a single lysine to coordinate two nickel ions.

It catalyses the reaction urea + 2 H2O + H(+) = hydrogencarbonate + 2 NH4(+). It participates in nitrogen metabolism; urea degradation; CO(2) and NH(3) from urea (urease route): step 1/1. Requires the three urease accessory proteins URED, UREF AND UREG for its activation. Its function is as follows. Urea hydrolase involved in nitrogen recycling from ureide, purine, and arginine catabolism. This chain is Urease, found in Arabidopsis thaliana (Mouse-ear cress).